The following is an 83-amino-acid chain: DNA-directed RNA polymerase subunit omega (83 aa).

It belongs to the RNA polymerase subunit omega family. The RNAP catalytic core consists of 2 alpha, 1 beta, 1 beta' and 1 omega subunit. When a sigma factor is associated with the core the holoenzyme is formed, which can initiate transcription.

It carries out the reaction RNA(n) + a ribonucleoside 5'-triphosphate = RNA(n+1) + diphosphate. Functionally, promotes RNA polymerase assembly. Latches the N- and C-terminal regions of the beta' subunit thereby facilitating its interaction with the beta and alpha subunits. The sequence is that of DNA-directed RNA polymerase subunit omega from Chromohalobacter salexigens (strain ATCC BAA-138 / DSM 3043 / CIP 106854 / NCIMB 13768 / 1H11).